Here is a 280-residue protein sequence, read N- to C-terminus: Bis(5'-nucleosyl)-tetraphosphatase, symmetrical (280 aa).

This sequence belongs to the Ap4A hydrolase family.

It catalyses the reaction P(1),P(4)-bis(5'-adenosyl) tetraphosphate + H2O = 2 ADP + 2 H(+). Hydrolyzes diadenosine 5',5'''-P1,P4-tetraphosphate to yield ADP. This Escherichia coli O17:K52:H18 (strain UMN026 / ExPEC) protein is Bis(5'-nucleosyl)-tetraphosphatase, symmetrical.